We begin with the raw amino-acid sequence, 203 residues long: Nucleoside triphosphate pyrophosphatase (203 aa).

The active-site Proton acceptor is the Asp77.

The protein belongs to the Maf family. Requires a divalent metal cation as cofactor.

It is found in the cytoplasm. It catalyses the reaction a ribonucleoside 5'-triphosphate + H2O = a ribonucleoside 5'-phosphate + diphosphate + H(+). The catalysed reaction is a 2'-deoxyribonucleoside 5'-triphosphate + H2O = a 2'-deoxyribonucleoside 5'-phosphate + diphosphate + H(+). Nucleoside triphosphate pyrophosphatase. May have a dual role in cell division arrest and in preventing the incorporation of modified nucleotides into cellular nucleic acids. This is Nucleoside triphosphate pyrophosphatase from Rickettsia felis (strain ATCC VR-1525 / URRWXCal2) (Rickettsia azadi).